The chain runs to 145 residues: Photosystem I reaction center subunit VI-2, chloroplastic (145 aa).

Residues 1 to 50 (MASFATIAAVQPSAAVKGLGGSSLAGAKLFIKPSRQSFKTKSTRAGAVVA) constitute a chloroplast transit peptide. A helical membrane pass occupies residues 102–118 (LLLKFLILGGGSLLTYV). Residues 126–145 (VLPIKRGPQEPPKLGPRGKL) form a disordered region.

This sequence belongs to the psaH family.

Its subcellular location is the plastid. The protein resides in the chloroplast thylakoid membrane. Functionally, possible role could be the docking of the LHC I antenna complex to the core complex. In Arabidopsis thaliana (Mouse-ear cress), this protein is Photosystem I reaction center subunit VI-2, chloroplastic (PSAH2).